Reading from the N-terminus, the 240-residue chain is Ribonuclease PH (240 aa).

Residues arginine 87 and 125 to 127 (GTR) contribute to the phosphate site.

It belongs to the RNase PH family. As to quaternary structure, homohexameric ring arranged as a trimer of dimers.

It catalyses the reaction tRNA(n+1) + phosphate = tRNA(n) + a ribonucleoside 5'-diphosphate. Functionally, phosphorolytic 3'-5' exoribonuclease that plays an important role in tRNA 3'-end maturation. Removes nucleotide residues following the 3'-CCA terminus of tRNAs; can also add nucleotides to the ends of RNA molecules by using nucleoside diphosphates as substrates, but this may not be physiologically important. Probably plays a role in initiation of 16S rRNA degradation (leading to ribosome degradation) during starvation. This chain is Ribonuclease PH, found in Dictyoglomus turgidum (strain DSM 6724 / Z-1310).